A 56-amino-acid chain; its full sequence is UPF0391 membrane protein PSHAa0537 (56 aa).

The next 2 helical transmembrane spans lie at 6-26 and 27-47; these read ITFL…IAGA and AAGI…ISLV.

The protein belongs to the UPF0391 family.

Its subcellular location is the cell membrane. In Pseudoalteromonas translucida (strain TAC 125), this protein is UPF0391 membrane protein PSHAa0537.